A 458-amino-acid chain; its full sequence is UDP-N-acetylmuramoylalanine--D-glutamate ligase (458 aa).

124 to 130 (GSDGKTT) serves as a coordination point for ATP.

Belongs to the MurCDEF family.

Its subcellular location is the cytoplasm. The catalysed reaction is UDP-N-acetyl-alpha-D-muramoyl-L-alanine + D-glutamate + ATP = UDP-N-acetyl-alpha-D-muramoyl-L-alanyl-D-glutamate + ADP + phosphate + H(+). It functions in the pathway cell wall biogenesis; peptidoglycan biosynthesis. Functionally, cell wall formation. Catalyzes the addition of glutamate to the nucleotide precursor UDP-N-acetylmuramoyl-L-alanine (UMA). The polypeptide is UDP-N-acetylmuramoylalanine--D-glutamate ligase (Clostridium kluyveri (strain NBRC 12016)).